A 185-amino-acid polypeptide reads, in one-letter code: Orotate phosphoribosyltransferase (185 aa).

5-phospho-alpha-D-ribose 1-diphosphate-binding positions include arginine 98, lysine 99, lysine 102, histidine 104, and 128–136 (EDVTTTGGS). Positions 132 and 160 each coordinate orotate.

It belongs to the purine/pyrimidine phosphoribosyltransferase family. PyrE subfamily. As to quaternary structure, homodimer. The cofactor is Mg(2+).

The catalysed reaction is orotidine 5'-phosphate + diphosphate = orotate + 5-phospho-alpha-D-ribose 1-diphosphate. The protein operates within pyrimidine metabolism; UMP biosynthesis via de novo pathway; UMP from orotate: step 1/2. Functionally, catalyzes the transfer of a ribosyl phosphate group from 5-phosphoribose 1-diphosphate to orotate, leading to the formation of orotidine monophosphate (OMP). The polypeptide is Orotate phosphoribosyltransferase (Bradyrhizobium sp. (strain BTAi1 / ATCC BAA-1182)).